A 621-amino-acid chain; its full sequence is Phosphatidylinositol-3,5-bisphosphate 3-phosphatase MTMR6 (621 aa).

A GRAM domain is found at 1–101 (MEHIRTTKVE…YNSLLQLSKQ (101 aa)). The tract at residues 2 to 141 (EHIRTTKVEQ…EEYKRMGVPN (140 aa)) is interaction with RAB1B. The residue at position 108 (Tyr108) is a Phosphotyrosine. One can recognise a Myotubularin phosphatase domain in the interval 124–499 (GWQLIDLAEE…FNFKFWRNMY (376 aa)). The a 1,2-diacyl-sn-glycero-3-phospho-(1D-myo-inositol-3,5-bisphosphate) site is built by Asn248, Asn273, and Ile274. Residues Asn248, Asn273, and Ile274 each contribute to the a 1,2-diacyl-sn-glycero-3-phospho-(1D-myo-inositol-3-phosphate) site. The Phosphocysteine intermediate role is filled by Cys336. Residues Ser337, Asp338, Gly339, Trp340, Asp341, Arg342, Lys378, and Arg382 each contribute to the a 1,2-diacyl-sn-glycero-3-phospho-(1D-myo-inositol-3,5-bisphosphate) site. A 1,2-diacyl-sn-glycero-3-phospho-(1D-myo-inositol-3-phosphate) contacts are provided by Ser337, Asp338, Gly339, Trp340, Asp341, and Arg342. Residue Arg382 coordinates a 1,2-diacyl-sn-glycero-3-phospho-(1D-myo-inositol-3-phosphate). 4 positions are modified to phosphoserine: Ser556, Ser561, Ser589, and Ser611.

The protein belongs to the protein-tyrosine phosphatase family. Non-receptor class myotubularin subfamily. Homodimer. Heterodimer (via C-terminus) with MTMR9 (via C-terminus). Interacts with ALKBH4. Interacts with KCNN4. Interacts (via GRAM domain) with RAB1B (in GDP-bound form); the interaction regulates MTMR6 recruitment to the endoplasmic reticulum-Golgi intermediate compartment. Expressed in CD4+ T-cells.

It localises to the cytoplasm. Its subcellular location is the endoplasmic reticulum-Golgi intermediate compartment. The protein localises to the endoplasmic reticulum. The protein resides in the cell projection. It is found in the ruffle membrane. It localises to the perinuclear region. The enzyme catalyses a 1,2-diacyl-sn-glycero-3-phospho-(1D-myo-inositol-3,5-bisphosphate) + H2O = a 1,2-diacyl-sn-glycero-3-phospho-(1D-myo-inositol-5-phosphate) + phosphate. It carries out the reaction a 1,2-diacyl-sn-glycero-3-phospho-(1D-myo-inositol-3-phosphate) + H2O = a 1,2-diacyl-sn-glycero-3-phospho-(1D-myo-inositol) + phosphate. It catalyses the reaction 1,2-dioctanoyl-sn-glycero-3-phospho-(1D-myo-inositol-3,5-bisphosphate) + H2O = 1,2-dioctanoyl-sn-glycero-3-phospho-(1D-myo-inositol-5-phosphate) + phosphate. The catalysed reaction is 1,2-dioctanoyl-sn-glycero-3-phospho-(1-D-myo-inositol-3-phosphate) + H2O = 1,2-dioctanoyl-sn-glycero-3-phospho-(1D-myo-inositol) + phosphate. Its activity is regulated as follows. Allosterically activated by phosphatidylserine and/or phosphatidylinositol 4-phosphate (PtdIns(4)P), and phosphatidylinositol 5-phosphate (PtdIns(5)P). Interaction with MTMR9 increases catalytic activity towards phosphatidylinositol 3,5-bisphosphate. Functionally, lipid phosphatase that specifically dephosphorylates the D-3 position of phosphatidylinositol 3-phosphate and phosphatidylinositol 3,5-bisphosphate, generating phosphatidylinositol and phosphatidylinositol 5-phosphate. Binds with high affinity to phosphatidylinositol 3,5-bisphosphate (PtdIns(3,5)P2) but also to phosphatidylinositol 3-phosphate (PtdIns(3)P), phosphatidylinositol 4-phosphate (PtdIns(4)P), and phosphatidylinositol 5-phosphate (PtdIns(5)P), phosphatidic acid and phosphatidylserine. Negatively regulates ER-Golgi protein transport. Probably in association with MTMR9, plays a role in the late stages of macropinocytosis by dephosphorylating phosphatidylinositol 3-phosphate in membrane ruffles. Acts as a negative regulator of KCNN4/KCa3.1 channel activity in CD4(+) T-cells possibly by decreasing intracellular levels of phosphatidylinositol 3-phosphate. Negatively regulates proliferation of reactivated CD4(+) T-cells. In complex with MTMR9, negatively regulates DNA damage-induced apoptosis. The formation of the MTMR6-MTMR9 complex stabilizes both MTMR6 and MTMR9 protein levels. The chain is Phosphatidylinositol-3,5-bisphosphate 3-phosphatase MTMR6 from Homo sapiens (Human).